Here is a 1244-residue protein sequence, read N- to C-terminus: DNA polymerase beta (1244 aa).

13 tandem repeats follow at residues 1069–1072 (AGNP), 1073–1076 (AGNP), 1077–1080 (AGNP), 1081–1084 (AGNP), 1085–1088 (AGNP), 1089–1092 (AGNP), 1093–1096 (AGNP), 1097–1100 (AGNP), 1101–1104 (AGNP), 1105–1108 (AGNP), 1109–1112 (AGNP), 1113–1116 (AGNP), and 1117–1120 (AGNP). The disordered stretch occupies residues 1069–1118 (AGNPAGNPAGNPAGNPAGNPAGNPAGNPAGNPAGNPAGNPAGNPAGNPAG). The 13 X 4 AA tandem repeats of A-G-N-P stretch occupies residues 1069–1120 (AGNPAGNPAGNPAGNPAGNPAGNPAGNPAGNPAGNPAGNPAGNPAGNPAGNP).

Belongs to the DNA polymerase type-B family.

It catalyses the reaction DNA(n) + a 2'-deoxyribonucleoside 5'-triphosphate = DNA(n+1) + diphosphate. Its function is as follows. DNA-directed DNA polymerase involved in viral DNA replication. This African swine fever virus (isolate Pig/Portugal/Lis 60/1960) (ASFV) protein is DNA polymerase beta (DPOL).